A 485-amino-acid polypeptide reads, in one-letter code: Glutamyl-tRNA(Gln) amidotransferase subunit A (485 aa).

Active-site charge relay system residues include K78 and S153. S177 (acyl-ester intermediate) is an active-site residue.

It belongs to the amidase family. GatA subfamily. In terms of assembly, heterotrimer of A, B and C subunits.

It carries out the reaction L-glutamyl-tRNA(Gln) + L-glutamine + ATP + H2O = L-glutaminyl-tRNA(Gln) + L-glutamate + ADP + phosphate + H(+). Functionally, allows the formation of correctly charged Gln-tRNA(Gln) through the transamidation of misacylated Glu-tRNA(Gln) in organisms which lack glutaminyl-tRNA synthetase. The reaction takes place in the presence of glutamine and ATP through an activated gamma-phospho-Glu-tRNA(Gln). The chain is Glutamyl-tRNA(Gln) amidotransferase subunit A from Bacillus cereus (strain AH820).